Reading from the N-terminus, the 222-residue chain is Thiopurine S-methyltransferase (222 aa).

Positions 10, 45, 66, and 123 each coordinate S-adenosyl-L-methionine.

It belongs to the class I-like SAM-binding methyltransferase superfamily. TPMT family.

The protein localises to the cytoplasm. It carries out the reaction S-adenosyl-L-methionine + a thiopurine = S-adenosyl-L-homocysteine + a thiopurine S-methylether.. The chain is Thiopurine S-methyltransferase from Pseudomonas fluorescens (strain ATCC BAA-477 / NRRL B-23932 / Pf-5).